The following is a 399-amino-acid chain: Homoserine O-acetyltransferase (399 aa).

An AB hydrolase-1 domain is found at Asn63–Leu372. Ser168 serves as the catalytic Nucleophile. Position 238 (Arg238) interacts with substrate. Active-site residues include Asp334 and His367. Residue Asp368 coordinates substrate.

The protein belongs to the AB hydrolase superfamily. MetX family. Homodimer.

It localises to the cytoplasm. The enzyme catalyses L-homoserine + acetyl-CoA = O-acetyl-L-homoserine + CoA. Its pathway is amino-acid biosynthesis; L-methionine biosynthesis via de novo pathway; O-acetyl-L-homoserine from L-homoserine: step 1/1. Transfers an acetyl group from acetyl-CoA to L-homoserine, forming acetyl-L-homoserine. The chain is Homoserine O-acetyltransferase from Nitrobacter hamburgensis (strain DSM 10229 / NCIMB 13809 / X14).